We begin with the raw amino-acid sequence, 184 residues long: Peptide deformylase (184 aa).

2 residues coordinate Fe cation: C96 and H138. The active site involves E139. A Fe cation-binding site is contributed by H142.

It belongs to the polypeptide deformylase family. Fe(2+) is required as a cofactor.

The catalysed reaction is N-terminal N-formyl-L-methionyl-[peptide] + H2O = N-terminal L-methionyl-[peptide] + formate. Removes the formyl group from the N-terminal Met of newly synthesized proteins. Requires at least a dipeptide for an efficient rate of reaction. N-terminal L-methionine is a prerequisite for activity but the enzyme has broad specificity at other positions. The protein is Peptide deformylase of Cytophaga hutchinsonii (strain ATCC 33406 / DSM 1761 / CIP 103989 / NBRC 15051 / NCIMB 9469 / D465).